A 128-amino-acid polypeptide reads, in one-letter code: Phosphoribosyl-AMP cyclohydrolase (128 aa).

Residue aspartate 77 coordinates Mg(2+). Cysteine 78 is a Zn(2+) binding site. The Mg(2+) site is built by aspartate 79 and aspartate 81. Zn(2+) is bound by residues cysteine 95 and cysteine 102.

Belongs to the PRA-CH family. In terms of assembly, homodimer. It depends on Mg(2+) as a cofactor. Requires Zn(2+) as cofactor.

The protein localises to the cytoplasm. The enzyme catalyses 1-(5-phospho-beta-D-ribosyl)-5'-AMP + H2O = 1-(5-phospho-beta-D-ribosyl)-5-[(5-phospho-beta-D-ribosylamino)methylideneamino]imidazole-4-carboxamide. It functions in the pathway amino-acid biosynthesis; L-histidine biosynthesis; L-histidine from 5-phospho-alpha-D-ribose 1-diphosphate: step 3/9. Catalyzes the hydrolysis of the adenine ring of phosphoribosyl-AMP. This is Phosphoribosyl-AMP cyclohydrolase from Methylococcus capsulatus (strain ATCC 33009 / NCIMB 11132 / Bath).